Here is a 235-residue protein sequence, read N- to C-terminus: Small ribosomal subunit protein uS3 (235 aa).

A KH type-2 domain is found at Val-39 to Arg-107.

It belongs to the universal ribosomal protein uS3 family. As to quaternary structure, part of the 30S ribosomal subunit. Forms a tight complex with proteins S10 and S14.

Its function is as follows. Binds the lower part of the 30S subunit head. Binds mRNA in the 70S ribosome, positioning it for translation. The protein is Small ribosomal subunit protein uS3 of Buchnera aphidicola subsp. Cinara cedri (strain Cc).